The primary structure comprises 846 residues: Rho GTPase-activating protein 12 (846 aa).

The SH3 domain maps to 12–74; sequence PGQVYIEVEY…PAQYVKEVTR (63 aa). Positions 152–175 are enriched in polar residues; the sequence is LTHNNGKFNNDSHSPKVSSQNRTR. The interval 152 to 241 is disordered; sequence LTHNNGKFNN…PPNQGRPDSP (90 aa). Residues Ser165 and Ser176 each carry the phosphoserine modification. The segment covering 191 to 200 has biased composition (polar residues); it reads TSFSQEQSCD. Phosphoserine occurs at positions 201, 213, and 215. Over residues 224-234 the composition is skewed to polar residues; the sequence is TEQIRATTPPN. A phosphothreonine mark is found at Thr230 and Thr231. Residue Ser240 is modified to Phosphoserine. The residue at position 243 (Tyr243) is a Phosphotyrosine. WW domains follow at residues 265 to 298 and 358 to 391; these read IQIN…PPRW and DYTN…LPKY. The disordered stretch occupies residues 293–316; sequence WKPPRWTRDASISKGDFQNPGDQE. 2 disordered regions span residues 428–466 and 580–629; these read DTND…DQEK and ETDE…TKKN. Positions 445-461 are enriched in polar residues; sequence NESSPSSPKHQDTASSP. One can recognise a PH domain in the interval 463 to 575; sequence DQEKYGLLNV…WFKVLSSTIN (113 aa). The span at 580–590 shows a compositional bias: acidic residues; that stretch reads ETDEGIEEEIP. A Phosphoserine modification is found at Ser592. Over residues 594 to 609 the composition is skewed to basic and acidic residues; that stretch reads GIEKHDKEKEQKDPKK. A Rho-GAP domain is found at 656-844; sequence SNLANLCQRE…LILLELSSIF (189 aa).

Functionally, GTPase activator for the Rho-type GTPases by converting them to an inactive GDP-bound state. This is Rho GTPase-activating protein 12 (ARHGAP12) from Homo sapiens (Human).